Reading from the N-terminus, the 429-residue chain is UDP-N-acetylglucosamine 1-carboxyvinyltransferase (429 aa).

Lysine 22 to asparagine 23 is a phosphoenolpyruvate binding site. Arginine 102 is a UDP-N-acetyl-alpha-D-glucosamine binding site. Cysteine 126 functions as the Proton donor in the catalytic mechanism. Residue cysteine 126 is modified to 2-(S-cysteinyl)pyruvic acid O-phosphothioketal. UDP-N-acetyl-alpha-D-glucosamine contacts are provided by residues arginine 131–leucine 135, aspartate 316, and isoleucine 338.

It belongs to the EPSP synthase family. MurA subfamily.

The protein localises to the cytoplasm. It catalyses the reaction phosphoenolpyruvate + UDP-N-acetyl-alpha-D-glucosamine = UDP-N-acetyl-3-O-(1-carboxyvinyl)-alpha-D-glucosamine + phosphate. It participates in cell wall biogenesis; peptidoglycan biosynthesis. Its function is as follows. Cell wall formation. Adds enolpyruvyl to UDP-N-acetylglucosamine. The chain is UDP-N-acetylglucosamine 1-carboxyvinyltransferase from Methylobacterium nodulans (strain LMG 21967 / CNCM I-2342 / ORS 2060).